The chain runs to 284 residues: Cytosolic Fe-S cluster assembly factor NUBP2 homolog (284 aa).

Residue 27–34 (GKGGVGKS) participates in ATP binding. Positions 200 and 203 each coordinate [4Fe-4S] cluster.

This sequence belongs to the Mrp/NBP35 ATP-binding proteins family. NUBP2/CFD1 subfamily. Heterotetramer of 2 NUBP1 and 2 NUBP2 chains. The cofactor is [4Fe-4S] cluster.

Its subcellular location is the cytoplasm. Component of the cytosolic iron-sulfur (Fe/S) protein assembly (CIA) machinery. Required for maturation of extramitochondrial Fe-S proteins. The NUBP1-NUBP2 heterotetramer forms a Fe-S scaffold complex, mediating the de novo assembly of an Fe-S cluster and its transfer to target apoproteins. The polypeptide is Cytosolic Fe-S cluster assembly factor NUBP2 homolog (Monosiga brevicollis (Choanoflagellate)).